Consider the following 339-residue polypeptide: Anthranilate phosphoribosyltransferase (339 aa).

5-phospho-alpha-D-ribose 1-diphosphate is bound by residues Gly-79, 82–83 (GD), Thr-87, 89–92 (NVST), 107–115 (KHGNRAVSS), and Ser-119. Gly-79 is an anthranilate binding site. Mg(2+) is bound at residue Ser-91. Asn-110 is a binding site for anthranilate. Residue Arg-165 participates in anthranilate binding. Mg(2+) is bound by residues Asp-224 and Glu-225.

This sequence belongs to the anthranilate phosphoribosyltransferase family. As to quaternary structure, homodimer. It depends on Mg(2+) as a cofactor.

It carries out the reaction N-(5-phospho-beta-D-ribosyl)anthranilate + diphosphate = 5-phospho-alpha-D-ribose 1-diphosphate + anthranilate. Its pathway is amino-acid biosynthesis; L-tryptophan biosynthesis; L-tryptophan from chorismate: step 2/5. Functionally, catalyzes the transfer of the phosphoribosyl group of 5-phosphorylribose-1-pyrophosphate (PRPP) to anthranilate to yield N-(5'-phosphoribosyl)-anthranilate (PRA). This is Anthranilate phosphoribosyltransferase from Geobacillus kaustophilus (strain HTA426).